An 865-amino-acid chain; its full sequence is High affinity cAMP-specific and IBMX-insensitive 3',5'-cyclic phosphodiesterase 8B (865 aa).

Disordered stretches follow at residues 17 to 40 (CRDS…TAPL) and 52 to 92 (AMPP…TCRG). Residues 23 to 36 (SNSPRQTSSVSQGP) show a composition bias toward polar residues. Over residues 75–90 (GSGSSTGSSGPATTTC) the composition is skewed to low complexity. One can recognise a PAS domain in the interval 247 to 318 (ACNSVFTALD…DTINTCIKKG (72 aa)). Residues 373–415 (IHRDSGDNSQTEPHSFRHKSRRKESIDVKSISSRGSDAPSLQN) form a disordered region. Residues 402 to 415 (SISSRGSDAPSLQN) show a composition bias toward polar residues. The residue at position 497 (S497) is a Phosphoserine. The 337-residue stretch at 519–855 (TINDVPPSIA…KHWKTLDDLK (337 aa)) folds into the PDEase domain. The Proton donor role is filled by H595. H599, H635, and D636 together coordinate a divalent metal cation. 2 positions are modified to phosphoserine: S731 and S734. D761 lines the a divalent metal cation pocket.

Belongs to the cyclic nucleotide phosphodiesterase family. PDE8 subfamily. It depends on a divalent metal cation as a cofactor. As to expression, widely expressed.

The enzyme catalyses 3',5'-cyclic AMP + H2O = AMP + H(+). The protein operates within purine metabolism; 3',5'-cyclic AMP degradation; AMP from 3',5'-cyclic AMP: step 1/1. Functionally, hydrolyzes the second messenger cAMP, which is a key regulator of many important physiological processes. May be involved in specific signaling in the thyroid gland. This is High affinity cAMP-specific and IBMX-insensitive 3',5'-cyclic phosphodiesterase 8B (Pde8b) from Mus musculus (Mouse).